Reading from the N-terminus, the 200-residue chain is Large ribosomal subunit protein uL4 (200 aa).

The tract at residues 38–67 (GRQGSKAQKTRSEVSGGGKKPWRQKGTGRA) is disordered.

The protein belongs to the universal ribosomal protein uL4 family. As to quaternary structure, part of the 50S ribosomal subunit.

In terms of biological role, one of the primary rRNA binding proteins, this protein initially binds near the 5'-end of the 23S rRNA. It is important during the early stages of 50S assembly. It makes multiple contacts with different domains of the 23S rRNA in the assembled 50S subunit and ribosome. Forms part of the polypeptide exit tunnel. In Pseudomonas paraeruginosa (strain DSM 24068 / PA7) (Pseudomonas aeruginosa (strain PA7)), this protein is Large ribosomal subunit protein uL4.